The chain runs to 229 residues: NAD(P)H-hydrate epimerase (229 aa).

The region spanning A10–L217 is the YjeF N-terminal domain. (6S)-NADPHX is bound at residue N60–D64. Residues N61 and D125 each coordinate K(+). Residues G129 to P135 and D158 contribute to the (6S)-NADPHX site. S161 contributes to the K(+) binding site.

The protein belongs to the NnrE/AIBP family. The cofactor is K(+).

It catalyses the reaction (6R)-NADHX = (6S)-NADHX. It carries out the reaction (6R)-NADPHX = (6S)-NADPHX. In terms of biological role, catalyzes the epimerization of the S- and R-forms of NAD(P)HX, a damaged form of NAD(P)H that is a result of enzymatic or heat-dependent hydration. This is a prerequisite for the S-specific NAD(P)H-hydrate dehydratase to allow the repair of both epimers of NAD(P)HX. The protein is NAD(P)H-hydrate epimerase of Drosophila ananassae (Fruit fly).